The primary structure comprises 406 residues: 2,3-bisphosphoglycerate-independent phosphoglycerate mutase (406 aa).

This sequence belongs to the BPG-independent phosphoglycerate mutase family. A-PGAM subfamily.

The enzyme catalyses (2R)-2-phosphoglycerate = (2R)-3-phosphoglycerate. It functions in the pathway carbohydrate degradation; glycolysis; pyruvate from D-glyceraldehyde 3-phosphate: step 3/5. In terms of biological role, catalyzes the interconversion of 2-phosphoglycerate and 3-phosphoglycerate. The protein is 2,3-bisphosphoglycerate-independent phosphoglycerate mutase of Methanococcus maripaludis (strain C6 / ATCC BAA-1332).